The sequence spans 198 residues: MVNYPHKVSSQKRQTSLSQPKNFANRGMSFEKMINATNDYYLSQGLAVIHKKPTPIQIVQVDYPQRSRAKIVEAYFRQASTTDYSGVYNGYYIDFEVKETKQKRAIPMKNFHPHQIQHMEQVLAQQGICFVLLHFSSQQETYLLPAFDLIRFYHQDKRQKSMPLEYIREYGYEIKAGAFPQIPYLNVIKEHLLGGKTR.

The interval 1–22 is disordered; the sequence is MVNYPHKVSSQKRQTSLSQPKN. Polar residues predominate over residues 11–22; it reads QKRQTSLSQPKN. Positions 81, 83, 96, and 115 each coordinate Mg(2+).

The protein belongs to the RecU family. Mg(2+) serves as cofactor.

It localises to the cytoplasm. The enzyme catalyses Endonucleolytic cleavage at a junction such as a reciprocal single-stranded crossover between two homologous DNA duplexes (Holliday junction).. In terms of biological role, endonuclease that resolves Holliday junction intermediates in genetic recombination. Cleaves mobile four-strand junctions by introducing symmetrical nicks in paired strands. Promotes annealing of linear ssDNA with homologous dsDNA. Required for DNA repair, homologous recombination and chromosome segregation. The polypeptide is Holliday junction resolvase RecU (Streptococcus pneumoniae (strain P1031)).